Here is a 507-residue protein sequence, read N- to C-terminus: uncharacterized protein (507 aa).

Low complexity predominate over residues 1-12 (MEKSISSISKAS). A disordered region spans residues 1-20 (MEKSISSISKASMNSDEKLD). Helical transmembrane passes span 57-74 (FDFR…FNAL), 100-120 (IMIS…SYLY), 126-146 (ARIL…QAAV), 157-177 (WFLG…LTTF), 189-209 (IFYA…YGVF), 221-241 (YLFL…FLVL), 283-303 (VFKH…GVPL), 326-346 (LMTV…AFIS), 353-373 (GIVL…YGSI), 379-399 (IGVS…SSVL), 416-436 (VFTS…ANIF), and 445-465 (VPAL…VASI).

It belongs to the major facilitator superfamily. Allantoate permease family.

The protein localises to the endoplasmic reticulum. It localises to the membrane. This is an uncharacterized protein from Schizosaccharomyces pombe (strain 972 / ATCC 24843) (Fission yeast).